We begin with the raw amino-acid sequence, 376 residues long: Chaperone protein DnaJ (376 aa).

The J domain maps to 5–70; that stretch reads DYYEILGVSK…QKRAAYDQYG (66 aa). The CR-type zinc finger occupies 131-209; sequence GVTKEIRIPT…CHGHGRVERS (79 aa). Zn(2+)-binding residues include C144, C147, C161, C164, C183, C186, C197, and C200. CXXCXGXG motif repeat units lie at residues 144–151, 161–168, 183–190, and 197–204; these read CDVCHGSG, CPTCHGSG, CPHCQGRG, and CNKCHGHG.

This sequence belongs to the DnaJ family. In terms of assembly, homodimer. The cofactor is Zn(2+).

The protein resides in the cytoplasm. Participates actively in the response to hyperosmotic and heat shock by preventing the aggregation of stress-denatured proteins and by disaggregating proteins, also in an autonomous, DnaK-independent fashion. Unfolded proteins bind initially to DnaJ; upon interaction with the DnaJ-bound protein, DnaK hydrolyzes its bound ATP, resulting in the formation of a stable complex. GrpE releases ADP from DnaK; ATP binding to DnaK triggers the release of the substrate protein, thus completing the reaction cycle. Several rounds of ATP-dependent interactions between DnaJ, DnaK and GrpE are required for fully efficient folding. Also involved, together with DnaK and GrpE, in the DNA replication of plasmids through activation of initiation proteins. The protein is Chaperone protein DnaJ of Escherichia coli (strain K12 / DH10B).